The primary structure comprises 328 residues: Fe(3+) ions import ATP-binding protein FbpC 1 (328 aa).

One can recognise an ABC transporter domain in the interval 7–237 (LVLKNITKAF…PNSLFLANFM (231 aa)). 39–46 (GPSGCGKT) is a binding site for ATP.

Belongs to the ABC transporter superfamily. Fe(3+) ion importer (TC 3.A.1.10) family. The complex is composed of two ATP-binding proteins (FbpC), two transmembrane proteins (FbpB) and a solute-binding protein (FbpA).

The protein resides in the cell inner membrane. The enzyme catalyses Fe(3+)(out) + ATP + H2O = Fe(3+)(in) + ADP + phosphate + H(+). Functionally, part of the ABC transporter complex FbpABC involved in Fe(3+) ions import. Responsible for energy coupling to the transport system. This chain is Fe(3+) ions import ATP-binding protein FbpC 1, found in Haemophilus influenzae (strain ATCC 51907 / DSM 11121 / KW20 / Rd).